Here is a 640-residue protein sequence, read N- to C-terminus: Sodium-dependent nutrient amino acid transporter 1 (640 aa).

The segment covering 1–13 (MELKPNGNHNNNN) has biased composition (low complexity). Residues 1–25 (MELKPNGNHNNNNAAEKSEDTEKAK) are disordered. Residues 1–30 (MELKPNGNHNNNNAAEKSEDTEKAKAERTN) are Cytoplasmic-facing. Residues 16–25 (EKSEDTEKAK) show a composition bias toward basic and acidic residues. The next 3 helical transmembrane spans lie at 31-51 (WGNG…LGNV), 64-84 (GAFL…MYYL), and 117-137 (TICI…YLFV). N-linked (GlcNAc...) asparagine glycosylation is found at N174, N181, and N197. Transmembrane regions (helical) follow at residues 228–248 (PDWK…LVIM), 257–277 (AAYF…IRAV), 306–326 (AVVQ…MFAS), 340–360 (IVTT…FAIL), 400–420 (LFSV…IVAL), 447–467 (CGFL…LTLV), 473–493 (TYVV…IYGL), 515–535 (CWSF…MVTI), and 551–571 (VAGW…GLWY).

It belongs to the sodium:neurotransmitter symporter (SNF) (TC 2.A.22) family.

It is found in the membrane. Unusual broad substrate spectrum amino acid:sodium cotransporter that promotes absorption of the D isomers of essential amino acids. Neutral amino acids are the preferred substrates, especially methionine and phenylalanine. The chain is Sodium-dependent nutrient amino acid transporter 1 from Drosophila ananassae (Fruit fly).